Consider the following 172-residue polypeptide: Ribosome maturation factor RimM (172 aa).

In terms of domain architecture, PRC barrel spans 100-172; it reads PGEYYRVDLV…RIVVDWDPGF (73 aa).

It belongs to the RimM family. In terms of assembly, binds ribosomal protein uS19.

Its subcellular location is the cytoplasm. Functionally, an accessory protein needed during the final step in the assembly of 30S ribosomal subunit, possibly for assembly of the head region. Essential for efficient processing of 16S rRNA. May be needed both before and after RbfA during the maturation of 16S rRNA. It has affinity for free ribosomal 30S subunits but not for 70S ribosomes. The chain is Ribosome maturation factor RimM from Methylococcus capsulatus (strain ATCC 33009 / NCIMB 11132 / Bath).